We begin with the raw amino-acid sequence, 203 residues long: uncharacterized protein (203 aa).

The helical transmembrane segment at 89 to 109 (CEIPFAACSVLSWSLPTIAAL) threads the bilayer.

Its subcellular location is the membrane. This is an uncharacterized protein from Saccharomyces cerevisiae (strain ATCC 204508 / S288c) (Baker's yeast).